The chain runs to 387 residues: 1-deoxy-D-xylulose 5-phosphate reductoisomerase (387 aa).

Positions 10, 11, 12, 13, 36, 37, and 124 each coordinate NADPH. Residue K125 participates in 1-deoxy-D-xylulose 5-phosphate binding. Residue E126 participates in NADPH binding. Residue D150 participates in Mn(2+) binding. 1-deoxy-D-xylulose 5-phosphate-binding residues include S151, E152, S176, and H199. E152 contributes to the Mn(2+) binding site. Residue G205 coordinates NADPH. The 1-deoxy-D-xylulose 5-phosphate site is built by S212, N217, K218, and E221. Residue E221 participates in Mn(2+) binding.

It belongs to the DXR family. It depends on Mg(2+) as a cofactor. The cofactor is Mn(2+).

The catalysed reaction is 2-C-methyl-D-erythritol 4-phosphate + NADP(+) = 1-deoxy-D-xylulose 5-phosphate + NADPH + H(+). It participates in isoprenoid biosynthesis; isopentenyl diphosphate biosynthesis via DXP pathway; isopentenyl diphosphate from 1-deoxy-D-xylulose 5-phosphate: step 1/6. Its function is as follows. Catalyzes the NADPH-dependent rearrangement and reduction of 1-deoxy-D-xylulose-5-phosphate (DXP) to 2-C-methyl-D-erythritol 4-phosphate (MEP). In Cyanothece sp. (strain PCC 7425 / ATCC 29141), this protein is 1-deoxy-D-xylulose 5-phosphate reductoisomerase.